Reading from the N-terminus, the 689-residue chain is DNA polymerase epsilon subunit B (689 aa).

Residues 98–115 are compositionally biased toward basic and acidic residues; the sequence is EWSHEHPIQHEENILGRT. The tract at residues 98-155 is disordered; it reads EWSHEHPIQHEENILGRTDDDENNSDDEMPIAADSSLQNVSLSSPMRQPTERDEYKQP. The span at 116–126 shows a compositional bias: acidic residues; that stretch reads DDDENNSDDEM. Phosphoserine is present on Ser-122. The span at 132–144 shows a compositional bias: polar residues; that stretch reads SSLQNVSLSSPMR. Ser-141 carries the post-translational modification Phosphoserine; by CDC28. Over residues 146-155 the composition is skewed to basic and acidic residues; sequence PTERDEYKQP. A Phosphoserine modification is found at Ser-613.

The protein belongs to the DNA polymerase epsilon subunit B family. As to quaternary structure, DNA polymerase epsilon is a heterotetramer consisting of POL2, DPB2, DPB3 and DPB4. Post-translationally, phosphorylated in a cell cycle dependent manner during late G1 phase. Phosphorylation may facilitate the interaction with POL2 or the activity of DNA polymerase II. Phosphorylation is independent of DNA replication but dependent upon CDC28 in vivo. Both Ser-141 and Ser-613 are phosphorylated in vivo, but in vitro only Ser-141 is phosphorylated by CDC28.

It localises to the cytoplasm. It is found in the nucleus. Functionally, as accessory component of the DNA polymerase epsilon complex participates in chromosomal DNA replication. It is required during synthesis of the leading and lagging DNA strands at the replication fork and binds at/or near replication origins and moves along DNA with the replication fork. It has 3'-5' proofreading exonuclease activity that correct errors arising during DNA replication. It is also involved in DNA synthesis during DNA repair. This is DNA polymerase epsilon subunit B (DPB2) from Saccharomyces cerevisiae (strain ATCC 204508 / S288c) (Baker's yeast).